A 391-amino-acid polypeptide reads, in one-letter code: MTNNIKTITLNLGPQHPATHGVLRLILEMDGEVVNNTDPHIGLLHRGTEKLIEHKTYLQAIPYFDRLDYVSPMCQEHAFALAVESLLKCEVPRRAQFIRVLFSELTRILNHTLNIGSQALDIGATTPLLWLFEEREKIMEFYERVSGSRMHSNYFRPGGVAEDLPDGLLEDIDKFIEQFHPKLQDVESLLNENRLWKQRLVDIGVVLQQEAMEWGFSGPMLRGSGIAWDLRKSNPYDVYDEIDFEVPIGKNGDCYDRYLVRILEMYESIKIIKQCIEKMPKGAVKTNDPKLTPPTRAKMKESMEAMIHHFKLYTEGYEVPAGETYKAVEAPKGEFGVYLYSIGNNQPYRCRIKTPGFAHLQGLNFMSKGHLMADVITIIATLDIVFGEIDR.

This sequence belongs to the complex I 49 kDa subunit family. NDH-1 is composed of 14 different subunits. Subunits NuoB, C, D, E, F, and G constitute the peripheral sector of the complex.

The protein resides in the cell inner membrane. It carries out the reaction a quinone + NADH + 5 H(+)(in) = a quinol + NAD(+) + 4 H(+)(out). In terms of biological role, NDH-1 shuttles electrons from NADH, via FMN and iron-sulfur (Fe-S) centers, to quinones in the respiratory chain. The immediate electron acceptor for the enzyme in this species is believed to be ubiquinone. Couples the redox reaction to proton translocation (for every two electrons transferred, four hydrogen ions are translocated across the cytoplasmic membrane), and thus conserves the redox energy in a proton gradient. The chain is NADH-quinone oxidoreductase subunit D from Rickettsia canadensis (strain McKiel).